The primary structure comprises 308 residues: uncharacterized protein (308 aa).

The signal sequence occupies residues 1 to 28 (MILMKKFEIILFLFIAVLIFVFGYFVGA).

This is an uncharacterized protein from Methanocaldococcus jannaschii (strain ATCC 43067 / DSM 2661 / JAL-1 / JCM 10045 / NBRC 100440) (Methanococcus jannaschii).